The primary structure comprises 79 residues: MKMNVVVLSVVVLLLFIANIQQTEAGKPEKEVNFPAPGKKPTREDCKKACANKYTNGVMSKVIVAKLTGKNCYCKYQEN.

An N-terminal signal peptide occupies residues 1 to 25 (MKMNVVVLSVVVLLLFIANIQQTEA).

It belongs to the scoloptoxin-15 family. In terms of processing, contains 2 disulfide bonds. As to expression, expressed by the venom gland.

It is found in the secreted. This Scolopendra morsitans (Tanzanian blue ringleg centipede) protein is U-scoloptoxin(15)-Sm1a.